The sequence spans 330 residues: Ketol-acid reductoisomerase (NADP(+)) (330 aa).

The KARI N-terminal Rossmann domain maps to 2 to 182 (IHVYYDKDAN…GCTKAGVIET (181 aa)). NADP(+) contacts are provided by residues 25-28 (YGSQ), Arg-48, Ser-51, Ser-53, and 83-86 (DEVQ). Residue His-108 is part of the active site. An NADP(+)-binding site is contributed by Gly-134. The KARI C-terminal knotted domain maps to 183–328 (TFKEETETDL…KKLRDMMPWI (146 aa)). Residues Asp-191, Glu-195, Glu-227, and Glu-231 each coordinate Mg(2+). Ser-252 lines the substrate pocket.

The protein belongs to the ketol-acid reductoisomerase family. Mg(2+) serves as cofactor.

The enzyme catalyses (2R)-2,3-dihydroxy-3-methylbutanoate + NADP(+) = (2S)-2-acetolactate + NADPH + H(+). It carries out the reaction (2R,3R)-2,3-dihydroxy-3-methylpentanoate + NADP(+) = (S)-2-ethyl-2-hydroxy-3-oxobutanoate + NADPH + H(+). It participates in amino-acid biosynthesis; L-isoleucine biosynthesis; L-isoleucine from 2-oxobutanoate: step 2/4. Its pathway is amino-acid biosynthesis; L-valine biosynthesis; L-valine from pyruvate: step 2/4. Involved in the biosynthesis of branched-chain amino acids (BCAA). Catalyzes an alkyl-migration followed by a ketol-acid reduction of (S)-2-acetolactate (S2AL) to yield (R)-2,3-dihydroxy-isovalerate. In the isomerase reaction, S2AL is rearranged via a Mg-dependent methyl migration to produce 3-hydroxy-3-methyl-2-ketobutyrate (HMKB). In the reductase reaction, this 2-ketoacid undergoes a metal-dependent reduction by NADPH to yield (R)-2,3-dihydroxy-isovalerate. The polypeptide is Ketol-acid reductoisomerase (NADP(+)) (Halothermothrix orenii (strain H 168 / OCM 544 / DSM 9562)).